The primary structure comprises 62 residues: Large ribosomal subunit protein bL35 (62 aa).

A disordered region spans residues 25-62 (EQAYRSHLSQNKTTKQKRQARKSVQMHSSDVKRFKALI). The segment covering 53–62 (SDVKRFKALI) has biased composition (basic and acidic residues).

The protein belongs to the bacterial ribosomal protein bL35 family.

The protein is Large ribosomal subunit protein bL35 of Mycoplasmopsis fermentans (Mycoplasma fermentans).